Here is a 59-residue protein sequence, read N- to C-terminus: Single-pass membrane and coiled-coil domain-containing protein 4 homolog (59 aa).

The span at 1–11 (MAGRNKAKPRL) shows a compositional bias: basic residues. A disordered region spans residues 1 to 20 (MAGRNKAKPRLSKKEKEERR). A coiled-coil region spans residues 10–30 (RLSKKEKEERRKDMAEVQEKV). A helical membrane pass occupies residues 30-50 (VFSVVVPVVVAFTVVIMLIVY).

Belongs to the SMCO4 family.

Its subcellular location is the membrane. This Argas monolakensis (Mono lake bird tick) protein is Single-pass membrane and coiled-coil domain-containing protein 4 homolog.